A 672-amino-acid polypeptide reads, in one-letter code: Nuclear hormone receptor family member nhr-5 (672 aa).

The segment covering 1–19 (MSSGGNSSNVNRNSGSSNV) has biased composition (low complexity). A disordered region spans residues 1–38 (MSSGGNSSNVNRNSGSSNVITLNDSDEETEDSNLGSSS). A DNA-binding region (nuclear receptor) is located at residues 40–115 (TNLCKVCGAE…EGMNPAYVRP (76 aa)). 2 consecutive NR C4-type zinc fingers follow at residues 43 to 63 (CKVC…CVGC) and 79 to 98 (CAAN…CRSC). The NR LBD domain maps to 155–424 (EMRTILMTLL…PLLTDLFGCF (270 aa)). The segment at 550-577 (NIQGPSHLPQCGSTVTQRPTVPSSTTSS) is disordered. A compositionally biased stretch (low complexity) spans 562–577 (STVTQRPTVPSSTTSS).

Belongs to the nuclear hormone receptor family.

It is found in the nucleus. Functionally, orphan nuclear receptor. The polypeptide is Nuclear hormone receptor family member nhr-5 (nhr-5) (Caenorhabditis elegans).